A 159-amino-acid chain; its full sequence is Serine-protein kinase RsbW (159 aa).

This sequence belongs to the anti-sigma-factor family.

The catalysed reaction is L-seryl-[protein] + ATP = O-phospho-L-seryl-[protein] + ADP + H(+). It carries out the reaction L-threonyl-[protein] + ATP = O-phospho-L-threonyl-[protein] + ADP + H(+). Negative regulator of sigma-B activity. Phosphorylates and inactivates its specific antagonist protein, RsbV. Upon phosphorylation of RsbV, RsbW is released and binds to sigma-B, thereby blocking its ability to form an RNA polymerase holoenzyme (E-sigma-B). This chain is Serine-protein kinase RsbW, found in Staphylococcus aureus (strain MRSA252).